We begin with the raw amino-acid sequence, 360 residues long: Alanine racemase (360 aa).

Lysine 36 acts as the Proton acceptor; specific for D-alanine in catalysis. Lysine 36 is subject to N6-(pyridoxal phosphate)lysine. A substrate-binding site is contributed by arginine 132. Tyrosine 256 serves as the catalytic Proton acceptor; specific for L-alanine. Methionine 304 contributes to the substrate binding site.

It belongs to the alanine racemase family. It depends on pyridoxal 5'-phosphate as a cofactor.

It catalyses the reaction L-alanine = D-alanine. The protein operates within amino-acid biosynthesis; D-alanine biosynthesis; D-alanine from L-alanine: step 1/1. In terms of biological role, catalyzes the interconversion of L-alanine and D-alanine. May also act on other amino acids. In Haemophilus influenzae (strain ATCC 51907 / DSM 11121 / KW20 / Rd), this protein is Alanine racemase (alr).